Here is a 44-residue protein sequence, read N- to C-terminus: Conotoxin S5.1 (44 aa).

In terms of processing, contains 3 disulfide bonds. Expressed by the venom duct.

The protein localises to the secreted. The chain is Conotoxin S5.1 from Conus striatus (Striated cone).